Reading from the N-terminus, the 213-residue chain is MSVSLSKGQGVSLKKNEYDLSSVTIGLGWDINEEKKGFLGGIFGKKEEEYDLDVIAFLCNSAGKVTDLGNVENGKPTLVNGDIIFFNSLRHKSGNIWLTGDNRTGAGDGDDEQIIVRLNSLDAQYEKIVFIVQIYNGEKLQQHFGKVQNAFIRAVDARNIEMARFDLSGGPAFASQRSMVFAELIREATGWKLRAIGEPSESDSFVSHLRNYM.

The protein belongs to the CAPAB/TerDEXZ family.

Not known; seems to contribute to the tellurium resistance (Ter) mechanism. Also involved in phage inhibition (Phi) and colicin resistance (PacB). The sequence is that of Tellurium resistance protein TerX (terX) from Serratia marcescens.